Consider the following 224-residue polypeptide: MTKKICIAIDGPAAAGKSTVAKIVAKKLRFVYIDTGAMYRAVTYIALKNNVAYEDEMAIDALLKKTVIRFEPGEVQQVFVNEENVTDVIRSLEVTNHVSIVAAHPAIREALQERQQVFATEGGIVMDGRDIGTAVLPNAELKIFLLASVEERAERRYKENMAKGFAGDLNQLKKEIEERDHLDYTREHSPLKKANDAIEVDTTSMSIDEVANKILSLAEQKIQN.

G11 to T19 contributes to the ATP binding site.

Belongs to the cytidylate kinase family. Type 1 subfamily.

It is found in the cytoplasm. It catalyses the reaction CMP + ATP = CDP + ADP. The catalysed reaction is dCMP + ATP = dCDP + ADP. The polypeptide is Cytidylate kinase (Listeria innocua serovar 6a (strain ATCC BAA-680 / CLIP 11262)).